A 493-amino-acid chain; its full sequence is Ketol-acid reductoisomerase (NADP(+)) (493 aa).

The KARI N-terminal Rossmann domain occupies 15–208; sequence AQLGKCRFMQ…GGDRAGVLES (194 aa). NADP(+) contacts are provided by residues 45–48, Arg-68, Arg-76, Ser-78, and 108–110; these read CGAQ and DKQ. His-132 is an active-site residue. Gly-158 lines the NADP(+) pocket. KARI C-terminal knotted domains are found at residues 209–344 and 345–486; these read SFVA…NAPA and FAGK…MKDM. Positions 217, 221, 389, and 393 each coordinate Mg(2+). Ser-414 serves as a coordination point for substrate.

This sequence belongs to the ketol-acid reductoisomerase family. Mg(2+) is required as a cofactor.

The enzyme catalyses (2R)-2,3-dihydroxy-3-methylbutanoate + NADP(+) = (2S)-2-acetolactate + NADPH + H(+). It carries out the reaction (2R,3R)-2,3-dihydroxy-3-methylpentanoate + NADP(+) = (S)-2-ethyl-2-hydroxy-3-oxobutanoate + NADPH + H(+). The protein operates within amino-acid biosynthesis; L-isoleucine biosynthesis; L-isoleucine from 2-oxobutanoate: step 2/4. Its pathway is amino-acid biosynthesis; L-valine biosynthesis; L-valine from pyruvate: step 2/4. In terms of biological role, involved in the biosynthesis of branched-chain amino acids (BCAA). Catalyzes an alkyl-migration followed by a ketol-acid reduction of (S)-2-acetolactate (S2AL) to yield (R)-2,3-dihydroxy-isovalerate. In the isomerase reaction, S2AL is rearranged via a Mg-dependent methyl migration to produce 3-hydroxy-3-methyl-2-ketobutyrate (HMKB). In the reductase reaction, this 2-ketoacid undergoes a metal-dependent reduction by NADPH to yield (R)-2,3-dihydroxy-isovalerate. The sequence is that of Ketol-acid reductoisomerase (NADP(+)) from Aeromonas hydrophila subsp. hydrophila (strain ATCC 7966 / DSM 30187 / BCRC 13018 / CCUG 14551 / JCM 1027 / KCTC 2358 / NCIMB 9240 / NCTC 8049).